Here is a 605-residue protein sequence, read N- to C-terminus: Insulin-like growth factor-binding protein complex acid labile subunit (605 aa).

The N-terminal stretch at 1–27 (MALRKGGLALALLLLSWVALGPRSLEG) is a signal peptide. Residues 32 to 74 (TPGEAEGPACPAACVCSYDDDADELSVFCSSRNLTRLPDGVPG) form the LRRNT domain. Disulfide bonds link Cys41/Cys47 and Cys45/Cys60. N-linked (GlcNAc...) asparagine glycosylation is found at Asn64, Asn85, and Asn96. LRR repeat units follow at residues 75–96 (GTQALWLDGNNLSSVPPAAFQN), 99–120 (SLGFLNLQGGQLGSLEPQALLG), 123–144 (NLCHLHLERNQLRSLALGTFAH), 147–168 (ALASLGLSNNRLSRLEDGLFEG), 171–192 (SLWDLNLGWNSLAVLPDAAFRG), 195–216 (SLRELVLAGNRLAYLQPALFSG), 219–240 (ELRELDLSRNALRAIKANVFVQ), 243–264 (RLQKLYLDRNLIAAVAPGAFLG), 267–288 (ALRWLDLSHNRVAGLLEDTFPG), 291–312 (GLRVLRLSHNAIASLRPRTFKD), 315–336 (FLEELQLGHNRIRQLAERSFEG), 339–360 (QLEVLTLDHNQLQEVKAGAFLG), 363–384 (NVAVMNLSGNCLRNLPEQVFRG), 387–408 (KLHSLHLEGSCLGRIRPHTFTG), 411–432 (GLRRLFLKDNGLVGIEEQSLWG), 435–456 (ELLELDLTSNQLTHLPHRLFQG), 459–480 (KLEYLLLSRNRLAELPADALGP), 483–504 (RAFWLDVSHNRLEALPNSLLAP), and 507–528 (RLRYLSLRNNSLRTFTPQPPGL). N-linked (GlcNAc...) asparagine glycosylation occurs at Asn368. N-linked (GlcNAc...) asparagine glycosylation is present at Asn515. The LRRCT domain occupies 536–605 (NPWDCGCPLK…DLSEAHFAPC (70 aa)). Cystine bridges form between Cys540-Cys583, Cys542-Cys605, and Cys566-Cys571. An N-linked (GlcNAc...) asparagine glycan is attached at Asn580.

Forms a ternary complex with IGF1 and IGFBP3. In terms of tissue distribution, plasma.

Its subcellular location is the secreted. It localises to the extracellular space. Involved in protein-protein interactions that result in protein complexes, receptor-ligand binding or cell adhesion. The chain is Insulin-like growth factor-binding protein complex acid labile subunit (IGFALS) from Homo sapiens (Human).